The following is a 40-amino-acid chain: uncharacterized protein (40 aa).

This is an uncharacterized protein from Treponema pallidum (strain Nichols).